A 688-amino-acid chain; its full sequence is Ethylmalonyl-CoA mutase (688 aa).

Positions 530-659 constitute a B12-binding domain; that stretch reads TPRLVVGKPG…VGLAKVVERA (130 aa). Residue H543 coordinates adenosylcob(III)alamin. The segment at 666–688 is disordered; it reads DRADTEAGVPGAPKRNESGAQVF.

Belongs to the methylmalonyl-CoA mutase family. Adenosylcob(III)alamin is required as a cofactor.

It carries out the reaction (2R)-ethylmalonyl-CoA = (2S)-methylsuccinyl-CoA. In terms of biological role, radical enzyme that catalyzes the transformation of (2R)-ethylmalonyl-CoA to (2S)-methylsuccinyl-CoA. Is involved in the ethylmalonyl-CoA pathway for acetyl-CoA assimilation required for M.extorquens growth on one- and two-carbon compounds such as ethylamine, methanol or ethanol as sole carbon source. This enzyme acts as a regulatory metabolic control point in this pathway, that allows M.extorquens to efficiently restore metabolic balance when challenged with a sudden change in the growth substrate. The protein is Ethylmalonyl-CoA mutase of Methylorubrum extorquens (strain ATCC 14718 / DSM 1338 / JCM 2805 / NCIMB 9133 / AM1) (Methylobacterium extorquens).